Here is a 209-residue protein sequence, read N- to C-terminus: Casparian strip membrane protein 1 (209 aa).

At 1-46 (MSSGANATTIDVPETRAEAKGKAPLIAAPIVATTKATPHPNAGWKK) the chain is on the cytoplasmic side. A helical membrane pass occupies residues 47–67 (GLAIFDFLLRLAAIAATLAAA). Topologically, residues 68–95 (TTMGTTDETLPFFTQFFQFQASFDDLPA) are extracellular. The helical transmembrane segment at 96–116 (FMFFVVATAIASGYLALSLPF) threads the bilayer. The Cytoplasmic portion of the chain corresponds to 117 to 137 (SLVSIFRPHAQGIRLLLIISD). Residues 138 to 158 (TVMLALTTAGAASATAIVYLA) form a helical membrane-spanning segment. Over 159-183 (HNGDSSANWIAICQQFTDFCQSVSG) the chain is Extracellular. A helical membrane pass occupies residues 184–204 (AVVASFIAVVIFMLLVMMSAL). The Cytoplasmic segment spans residues 205 to 209 (ALRKH).

The protein belongs to the Casparian strip membrane proteins (CASP) family. Homodimer and heterodimers.

It is found in the cell membrane. Regulates membrane-cell wall junctions and localized cell wall deposition. Required for establishment of the Casparian strip membrane domain (CSD) and the subsequent formation of Casparian strips, a cell wall modification of the root endodermis that determines an apoplastic barrier between the intraorganismal apoplasm and the extraorganismal apoplasm and prevents lateral diffusion. The polypeptide is Casparian strip membrane protein 1 (Vitis vinifera (Grape)).